The following is a 237-amino-acid chain: Tyrosine-protein kinase YwqD (237 aa).

Phosphotyrosine; by autocatalysis is present on Y228.

This sequence belongs to the CpsD/CapB family. Post-translationally, autophosphorylated in vitro, which inhibits ATPase activity. Dephosphorylated by YwqE in vitro.

It carries out the reaction L-tyrosyl-[protein] + ATP = O-phospho-L-tyrosyl-[protein] + ADP + H(+). In terms of biological role, may be involved in the regulation of capsular polysaccharide biosynthesis. Autophosphorylates in vitro. Phosphorylates and activates in vitro two UDP-glucose dehydrogenases, YwqF and TuaD, as well as the DNA-binding proteins Ssb and SsbB. This is Tyrosine-protein kinase YwqD (ywqD) from Bacillus subtilis (strain 168).